Reading from the N-terminus, the 361-residue chain is DNA replication and repair protein RecF (361 aa).

30–37 (GDNAQGKT) contacts ATP.

The protein belongs to the RecF family.

It localises to the cytoplasm. Functionally, the RecF protein is involved in DNA metabolism; it is required for DNA replication and normal SOS inducibility. RecF binds preferentially to single-stranded, linear DNA. It also seems to bind ATP. The protein is DNA replication and repair protein RecF of Clostridium novyi (strain NT).